Reading from the N-terminus, the 438-residue chain is Cysteine--tRNA ligase (438 aa).

Position 28 (C28) interacts with Zn(2+). Positions 30–40 (PTVYNHLHLGN) match the 'HIGH' region motif. Residues C207, H232, and E236 each coordinate Zn(2+). A 'KMSKS' region motif is present at residues 264-268 (KMSKS). ATP is bound at residue K267.

The protein belongs to the class-I aminoacyl-tRNA synthetase family. As to quaternary structure, monomer. It depends on Zn(2+) as a cofactor.

It localises to the cytoplasm. The catalysed reaction is tRNA(Cys) + L-cysteine + ATP = L-cysteinyl-tRNA(Cys) + AMP + diphosphate. This is Cysteine--tRNA ligase from Onion yellows phytoplasma (strain OY-M).